We begin with the raw amino-acid sequence, 606 residues long: Sulfite reductase [NADPH] flavoprotein alpha-component (606 aa).

In terms of domain architecture, Flavodoxin-like spans 68 to 206; sequence ITILSASQTG…AAEAWRKEVT (139 aa). FMN is bound by residues 74–79, 121–124, and 157–166; these read SQTGNA, STQG, and LGDITYEHFA. Residues 240–454 enclose the FAD-binding FR-type domain; it reads ESPLTATLSV…VEHNDNFRLP (215 aa). Residues threonine 328, glutamine 362, 392 to 395, 410 to 412, tyrosine 416, and 425 to 428 contribute to the FAD site; these read RLYS, TVG, and GGAS. NADP(+)-binding positions include 525 to 526, 531 to 535, and aspartate 568; these read SR and KVYVQ. Tyrosine 606 is a binding site for FAD.

The protein belongs to the NADPH-dependent sulphite reductase flavoprotein subunit CysJ family. It in the N-terminal section; belongs to the flavodoxin family. This sequence in the C-terminal section; belongs to the flavoprotein pyridine nucleotide cytochrome reductase family. Alpha(8)-beta(8). The alpha component is a flavoprotein, the beta component is a hemoprotein. FAD serves as cofactor. It depends on FMN as a cofactor.

The catalysed reaction is hydrogen sulfide + 3 NADP(+) + 3 H2O = sulfite + 3 NADPH + 4 H(+). It functions in the pathway sulfur metabolism; hydrogen sulfide biosynthesis; hydrogen sulfide from sulfite (NADPH route): step 1/1. Its function is as follows. Component of the sulfite reductase complex that catalyzes the 6-electron reduction of sulfite to sulfide. This is one of several activities required for the biosynthesis of L-cysteine from sulfate. The flavoprotein component catalyzes the electron flow from NADPH -&gt; FAD -&gt; FMN to the hemoprotein component. This chain is Sulfite reductase [NADPH] flavoprotein alpha-component, found in Zymomonas mobilis subsp. mobilis (strain ATCC 31821 / ZM4 / CP4).